The primary structure comprises 58 residues: MLGWTLVFLVVAVIAGLLGFTGIAGAAAGIAKIIFLIFIVLLVISLLVNAFRGKSPRL.

The next 2 helical transmembrane spans lie at 6–26 and 28–48; these read LVFL…IAGA and AGIA…SLLV.

It belongs to the UPF0391 family.

Its subcellular location is the cell membrane. This Shewanella baltica (strain OS155 / ATCC BAA-1091) protein is UPF0391 membrane protein Sbal_1421.